The chain runs to 173 residues: Transcriptional repressor NrdR (173 aa).

Residues 3-34 fold into a zinc finger; sequence CPFCQHADTRVIDSRVSEDGATIRRRRECEAC. The region spanning 49–139 is the ATP-cone domain; the sequence is PAIVKSDGTR…VYRSFEDVAD (91 aa).

The protein belongs to the NrdR family. Requires Zn(2+) as cofactor.

Negatively regulates transcription of bacterial ribonucleotide reductase nrd genes and operons by binding to NrdR-boxes. This is Transcriptional repressor NrdR from Stenotrophomonas maltophilia (strain R551-3).